Consider the following 132-residue polypeptide: Ribosome-binding factor A (132 aa).

It belongs to the RbfA family. In terms of assembly, monomer. Binds 30S ribosomal subunits, but not 50S ribosomal subunits or 70S ribosomes.

It localises to the cytoplasm. Functionally, one of several proteins that assist in the late maturation steps of the functional core of the 30S ribosomal subunit. Associates with free 30S ribosomal subunits (but not with 30S subunits that are part of 70S ribosomes or polysomes). Required for efficient processing of 16S rRNA. May interact with the 5'-terminal helix region of 16S rRNA. The polypeptide is Ribosome-binding factor A (Rhizorhabdus wittichii (strain DSM 6014 / CCUG 31198 / JCM 15750 / NBRC 105917 / EY 4224 / RW1) (Sphingomonas wittichii)).